Here is a 404-residue protein sequence, read N- to C-terminus: Aspartokinase 1 (404 aa).

7–10 serves as a coordination point for ATP; that stretch reads KFGG. Residue 25-30 participates in substrate binding; sequence HIKEAI. ATP is bound at residue Ser41. Substrate is bound by residues 52-54, Glu79, 130-131, 155-158, and Ser158; these read TDS, LA, and RGGS. Residues 178-179 and 184-189 contribute to the ATP site; these read TD and MTADPR. Substrate is bound by residues 299 to 301, 355 to 356, 369 to 370, and 376 to 377; these read SVD, VT, PI, and SH. Positions 344–404 constitute an ACT domain; sequence AVGAGIMGVP…ALHEVFELSK (61 aa).

Belongs to the aspartokinase family. As to quaternary structure, tetramer consisting of 2 isoforms Alpha (catalytic) and 2 isoforms Beta (function not known).

It carries out the reaction L-aspartate + ATP = 4-phospho-L-aspartate + ADP. Its pathway is amino-acid biosynthesis; L-lysine biosynthesis via DAP pathway; (S)-tetrahydrodipicolinate from L-aspartate: step 1/4. The protein operates within amino-acid biosynthesis; L-methionine biosynthesis via de novo pathway; L-homoserine from L-aspartate: step 1/3. It participates in amino-acid biosynthesis; L-threonine biosynthesis; L-threonine from L-aspartate: step 1/5. With respect to regulation, diaminopimelate-sensitive. Its function is as follows. Catalyzes the phosphorylation of the beta-carboxyl group of aspartic acid with ATP to yield 4-phospho-L-aspartate, which is involved in the branched biosynthetic pathway leading to the biosynthesis of amino acids threonine, isoleucine and methionine. The sequence is that of Aspartokinase 1 (dapG) from Bacillus subtilis (strain 168).